A 509-amino-acid polypeptide reads, in one-letter code: ATP synthase subunit alpha 1 (509 aa).

172–179 lines the ATP pocket; it reads GDRQTGKT.

Belongs to the ATPase alpha/beta chains family. F-type ATPases have 2 components, CF(1) - the catalytic core - and CF(0) - the membrane proton channel. CF(1) has five subunits: alpha(3), beta(3), gamma(1), delta(1), epsilon(1). CF(0) has four main subunits: a(1), b(1), b'(1) and c(9-12).

Its subcellular location is the cell inner membrane. The catalysed reaction is ATP + H2O + 4 H(+)(in) = ADP + phosphate + 5 H(+)(out). Produces ATP from ADP in the presence of a proton gradient across the membrane. The alpha chain is a regulatory subunit. The polypeptide is ATP synthase subunit alpha 1 (Dinoroseobacter shibae (strain DSM 16493 / NCIMB 14021 / DFL 12)).